The chain runs to 356 residues: Septin-12 (356 aa).

The segment at 1–23 (MDERRTPSPCSSRPSSPRTPPCE) is disordered. Over residues 7-16 (PSPCSSRPSS) the composition is skewed to low complexity. Positions 44–315 (TGFEFNIMVV…ENYRVLRLNE (272 aa)) constitute a Septin-type G domain. The interval 44-317 (TGFEFNIMVV…YRVLRLNESH (274 aa)) is interaction with SEPTIN7. The tract at residues 54–61 (GQSGLGKS) is G1 motif. GTP contacts are provided by residues 54–61 (GQSGLGKS), Thr87, Gly113, 193–201 (RADSLTIEE), Gly249, and Arg264. Positions 110 to 113 (DTPG) are G3 motif. Residues 192-195 (ARAD) are G4 motif. A self-association (via N-terminus) to polymerize octameric septin 12-7-6-2/4-2/4-6-7-12 filaments region spans residues 256-356 (VNGRCVLGRK…RSKDPRDDEC (101 aa)). The tract at residues 330–356 (PASPGQLMAPGPEKVRKRSKDPRDDEC) is disordered.

It belongs to the TRAFAC class TrmE-Era-EngA-EngB-Septin-like GTPase superfamily. Septin GTPase family. As to quaternary structure, septins polymerize into heterooligomeric protein complexes that form filaments, and can associate with cellular membranes, actin filaments and microtubules. GTPase activity is required for filament formation. Interacts with SEPTIN6 and SEPTIN11. Self-associates. Component of a octameric complex consisting of SEPTIN12, SEPTIN7, SEPTIN6 and SEPTIN2 or SEPTIN4 in the order 12-7-6-2-2-6-7-12 or 12-7-6-4-4-6-7-12 and located in the sperm annulus; the octamer polymerizes into filaments via the SEPTIN12 N- and C-termini; the SEPTIN12:SEPTIN7 association is mediated by the GTP-binding domains. Interacts with SPAG4 and LMNB1. Associates with alpha- and beta-tubulins. In terms of tissue distribution, predominantly expressed in testis and epididymis. Component of the sperm tail annulus (at protein level).

It is found in the cytoplasm. Its subcellular location is the cytoskeleton. The protein resides in the spindle. It localises to the cell projection. The protein localises to the cilium. It is found in the flagellum. Its function is as follows. Filament-forming cytoskeletal GTPase. May play a role in cytokinesis (Potential). Involved in spermatogenesis. Involved in the morphogenesis of sperm heads and the elongation of sperm tails probably implicating the association with alpha- and beta-tubulins. Forms a filamentous structure with SEPTIN7, SEPTIN6, SEPTIN2 and probably SEPTIN4 at the sperm annulus which is required for the structural integrity and motility of the sperm tail during postmeiotic differentiation. This chain is Septin-12, found in Rattus norvegicus (Rat).